A 381-amino-acid chain; its full sequence is Translation initiation factor eIF2B subunit beta (381 aa).

The tract at residues 125–148 is disordered; sequence LQKPEQPHQNRKNSSGSSSMKTKT. Positions 136–145 are enriched in polar residues; that stretch reads KNSSGSSSMK.

It belongs to the eIF-2B alpha/beta/delta subunits family. As to quaternary structure, component of the translation initiation factor 2B (eIF2B) complex which is a heterodecamer of two sets of five different subunits: alpha, beta, gamma, delta and epsilon. Subunits alpha, beta and delta comprise a regulatory subcomplex and subunits epsilon and gamma comprise a catalytic subcomplex. Within the complex, the hexameric regulatory complex resides at the center, with the two heterodimeric catalytic subcomplexes bound on opposite sides.

It is found in the cytoplasm. The protein resides in the cytosol. In terms of biological role, acts as a component of the translation initiation factor 2B (eIF2B) complex, which catalyzes the exchange of GDP for GTP on the eukaryotic initiation factor 2 (eIF2) complex gamma subunit. Its guanine nucleotide exchange factor activity is repressed when bound to eIF2 complex phosphorylated on the alpha subunit, thereby limiting the amount of methionyl-initiator methionine tRNA available to the ribosome and consequently global translation is repressed. It activates the synthesis of GCN4 in yeast under amino acid starvation conditions by suppressing the inhibitory effects of multiple AUG codons present in the leader of GCN4 mRNA. It may promote either repression or activation of GCN4 expression depending on amino acid availability. GCD6 and GCD7 repress GCN4 expression at the translational level by ensuring that ribosomes which have translated UORF1 will reinitiate at UORF2, -3, or -4 and thus fail to reach the GCN4 start site. The protein is Translation initiation factor eIF2B subunit beta (GCD7) of Saccharomyces cerevisiae (strain ATCC 204508 / S288c) (Baker's yeast).